Consider the following 396-residue polypeptide: Protein PIN-LIKES 5 (396 aa).

The Lumenal segment spans residues 1 to 5; that stretch reads MGFWS. Residues 6 to 26 traverse the membrane as a helical segment; sequence LLEVASMPVIQVLFMSLVGAF. Topologically, residues 27-45 are cytoplasmic; the sequence is MASDRCKLFPVEARNSMNK. Residues 46–66 form a helical membrane-spanning segment; sequence VVFVLFAPALMFANLAQTVTL. Over 67–73 the chain is Lumenal; the sequence is EDIISWW. Residues 74–94 traverse the membrane as a helical segment; it reads FMPVNMGLTFLIGGLLGWLVV. The Cytoplasmic portion of the chain corresponds to 95 to 106; the sequence is KILKPPPYLEGL. The chain crosses the membrane as a helical span at residues 107 to 127; sequence IVATCSAGNMGNLPIILVPAI. The Lumenal segment spans residues 128–144; sequence CDEDKSPFGNRSVCRTV. The helical transmembrane segment at 145-165 threads the bilayer; it reads GLSYASFSMALGGFYIWTYTF. Residues 166–229 lie on the Cytoplasmic side of the membrane; it reads RLIKGSAMKV…WRKGVDFLHE (64 aa). The chain crosses the membrane as a helical span at residues 230–250; it reads ILEELLAPPTLGAIIGFIFGA. Residues 251 to 273 are Lumenal-facing; the sequence is VRWLRNLIIGDDAPLRIVQSTAK. Residues 274–294 form a helical membrane-spanning segment; it reads LLGDGTIPCMTIILGGNLIQG. Residues 295 to 312 lie on the Cytoplasmic side of the membrane; that stretch reads LRSSAVKPMVVLGIVCVR. A helical transmembrane segment spans residues 313-333; sequence YIAMPIIGIGIVLTAANLGFL. Residues 334–337 lie on the Lumenal side of the membrane; that stretch reads PADP. Residues 338–358 form a helical membrane-spanning segment; sequence LFQYVLMLQFTLPPAMNIGTM. Topologically, residues 359–370 are cytoplasmic; it reads TQLYNVAQDECS. Residues 371-391 form a helical membrane-spanning segment; that stretch reads VLMLWTYLVAILALTVWSTIF. Residues 392–396 are Lumenal-facing; sequence LHLLV.

This sequence belongs to the auxin efflux carrier (TC 2.A.69.2) family. As to expression, expressed in seedlings, cauline leaves and flowers.

It is found in the endoplasmic reticulum membrane. Involved in cellular auxin homeostasis by regulating auxin metabolism. Regulates intracellular auxin accumulation at the endoplasmic reticulum and thus auxin availability for nuclear auxin signaling. This chain is Protein PIN-LIKES 5, found in Arabidopsis thaliana (Mouse-ear cress).